Here is a 341-residue protein sequence, read N- to C-terminus: Phenylalanine--tRNA ligase alpha subunit (341 aa).

A Mg(2+)-binding site is contributed by Glu-259.

The protein belongs to the class-II aminoacyl-tRNA synthetase family. Phe-tRNA synthetase alpha subunit type 1 subfamily. Tetramer of two alpha and two beta subunits. It depends on Mg(2+) as a cofactor.

The protein localises to the cytoplasm. The enzyme catalyses tRNA(Phe) + L-phenylalanine + ATP = L-phenylalanyl-tRNA(Phe) + AMP + diphosphate + H(+). The polypeptide is Phenylalanine--tRNA ligase alpha subunit (Mycobacterium tuberculosis (strain ATCC 25177 / H37Ra)).